The following is a 299-amino-acid chain: Probable lipid kinase YegS-like (299 aa).

The region spanning 2–133 is the DAGKc domain; it reads SRSAGSFLIL…IDIAHVNDKT (132 aa). ATP is bound by residues T40, 66–72, and T95; that span reads GDGTINE. Mg(2+) contacts are provided by L215, D218, and L220. Residue E271 is the Proton acceptor of the active site.

It belongs to the diacylglycerol/lipid kinase family. YegS lipid kinase subfamily. Mg(2+) serves as cofactor. Requires Ca(2+) as cofactor.

Its subcellular location is the cytoplasm. Its function is as follows. Probably phosphorylates lipids; the in vivo substrate is unknown. The protein is Probable lipid kinase YegS-like of Cronobacter sakazakii (strain ATCC BAA-894) (Enterobacter sakazakii).